The primary structure comprises 203 residues: Probable GTP-binding protein EngB (203 aa).

One can recognise an EngB-type G domain in the interval 21 to 196 (GAPEIAFLGR…WKKIFEAAGT (176 aa)). GTP is bound by residues 29–36 (GRSNVGKS), 55–59 (GRTQT), 79–82 (DLPG), 146–149 (TKID), and 175–177 (FSA). Mg(2+) contacts are provided by Ser36 and Thr57.

It belongs to the TRAFAC class TrmE-Era-EngA-EngB-Septin-like GTPase superfamily. EngB GTPase family. The cofactor is Mg(2+).

Necessary for normal cell division and for the maintenance of normal septation. The polypeptide is Probable GTP-binding protein EngB (Koribacter versatilis (strain Ellin345)).